Reading from the N-terminus, the 157-residue chain is Phospholipase A2 phaiodactylipin (157 aa).

Ca(2+) is bound by residues W34 and G36. Cystine bridges form between C35/C56, C55/C94, C62/C87, C85/C127, and C132/C143. An N-linked (GlcNAc...) asparagine glycan is attached at N43. H59 is an active-site residue. A Ca(2+)-binding site is contributed by D60. D88 is an active-site residue. N-linked (GlcNAc...) asparagine glycosylation is present at N101. Positions D134–R139 are cleaved as a propeptide — removed in mature form. N-linked (GlcNAc...) asparagine glycosylation occurs at N153.

This sequence belongs to the phospholipase A2 family. Group III subfamily. In terms of assembly, heterodimer composed of a small subunit and a large subunit; disulfide-linked. Ca(2+) serves as cofactor. As to expression, expressed by the venom gland.

It is found in the secreted. The catalysed reaction is a 1,2-diacyl-sn-glycero-3-phosphocholine + H2O = a 1-acyl-sn-glycero-3-phosphocholine + a fatty acid + H(+). In terms of biological role, scorpion venom phospholipase A2 (PLA2) that is lethal to crickets and crustaceae. Causes inflammation in mice and lysis of human erythrocytes. Has a mild anticoagulant effect on human platelets. PLA2 catalyzes the calcium-dependent hydrolysis of the 2-acyl groups in 3-sn-phosphoglycerides. The protein is Phospholipase A2 phaiodactylipin of Anuroctonus phaiodactylus (Mafia scorpion).